Reading from the N-terminus, the 1173-residue chain is PR domain zinc finger protein 10 (1173 aa).

The disordered stretch occupies residues 146–211 (RLPPMEGADS…AEPPRPFDPN (66 aa)). Residues 154–167 (DSSTTINSLPSPNA) show a composition bias toward polar residues. The span at 172–202 (KEDDDDDDDDDDDEEEEDDDGEDSDLDDWEA) shows a compositional bias: acidic residues. The SET domain maps to 248 to 366 (LPLVLYIDRF…PKQELKVWYA (119 aa)). An N-terminal PR domain; essential for transcriptional activator activity region spans residues 267-371 (IPKRTQFGPL…KVWYAASYAE (105 aa)). The segment at 395–417 (WPCYECNRRFMSSEQLQQHLNSH) adopts a C2H2-type 1 zinc-finger fold. Basic residues predominate over residues 430–447 (RGRTRTRRKFGPGRRPGR). The disordered stretch occupies residues 430–451 (RGRTRTRRKFGPGRRPGRPPKF). 9 C2H2-type zinc fingers span residues 559-581 (FKCL…LRFH), 589-611 (LTCD…MKFH), 617-639 (YSCI…VVVH), 645-668 (FSCP…RSFH), 673-695 (YQCT…MLRH), 701-724 (FLCS…QRMH), 756-779 (FKCR…SKRH), 801-824 (YYCQ…LKNH), and 863-886 (VCCP…RKKH). A C-terminal glutamine-rich region; essential for transcriptional activator activity region spans residues 926–1153 (QAMTELSQTL…PASNSSQTTQ (228 aa)). Disordered stretches follow at residues 1014 to 1056 (PTSG…ANSA) and 1125 to 1173 (KKSS…ISKP). Residues 1150 to 1160 (QTTQYIITTTT) show a composition bias toward low complexity. The segment covering 1161-1173 (NMNGSSEVHISKP) has biased composition (polar residues).

This sequence belongs to the class V-like SAM-binding methyltransferase superfamily.

The protein resides in the nucleus. Transcriptional activator, essential for early embryonic development and survival of embryonic stem cells (ESCs). Supports cell growth and survival during early development by transcriptionally activating the expression of the translation initiation factor EIF3B, to sustain global translation. Activates the transcription of FLNC. In Xenopus tropicalis (Western clawed frog), this protein is PR domain zinc finger protein 10 (prdm10).